Consider the following 386-residue polypeptide: L-lactate dehydrogenase (386 aa).

In terms of domain architecture, FMN hydroxy acid dehydrogenase spans 1–380 (MIISAASDYR…SGDALSRVTR (380 aa)). Y24 is a substrate binding site. FMN contacts are provided by S106 and Q127. Y129 contributes to the substrate binding site. FMN is bound at residue T155. A substrate-binding site is contributed by R164. Residue K251 coordinates FMN. The active-site Proton acceptor is H275. R278 serves as a coordination point for substrate. Residue 306–330 (DSGIRSGLDVVRMLALGADAVLLGR) coordinates FMN.

Belongs to the FMN-dependent alpha-hydroxy acid dehydrogenase family. FMN serves as cofactor.

The protein resides in the cell inner membrane. The enzyme catalyses (S)-lactate + A = pyruvate + AH2. In terms of biological role, catalyzes the conversion of L-lactate to pyruvate. Is coupled to the respiratory chain. The sequence is that of L-lactate dehydrogenase from Xanthomonas campestris pv. campestris (strain B100).